The sequence spans 975 residues: Monofunctional C1-tetrahydrofolate synthase, mitochondrial (975 aa).

Residues 1–30 constitute a mitochondrion transit peptide; it reads MSARLPFVLRRLARPQHPGSPRRLPSLCRA. The interval 13–45 is disordered; the sequence is ARPQHPGSPRRLPSLCRASSGRGSGCGGGEGLL. The tract at residues 31 to 345 is methylenetetrahydrofolate dehydrogenase and cyclohydrolase; the sequence is SSGRGSGCGG…REQQHRRWRL (315 aa). Over residues 34-44 the composition is skewed to gly residues; it reads RGSGCGGGEGL. N6-acetyllysine; alternate is present on K187. K187 is modified (N6-succinyllysine; alternate). Positions 346-975 are formyltetrahydrofolate synthetase; that stretch reads HCLKLQPLSP…TETEQVKGLF (630 aa). S354 carries the phosphoserine modification. 420–427 contributes to the ATP binding site; that stretch reads TPLGEGKS. N6-succinyllysine is present on K593.

In the N-terminal section; belongs to the tetrahydrofolate dehydrogenase/cyclohydrolase family. It in the C-terminal section; belongs to the formate--tetrahydrofolate ligase family. As to quaternary structure, homodimer.

It is found in the mitochondrion. It carries out the reaction (6S)-5,6,7,8-tetrahydrofolate + formate + ATP = (6R)-10-formyltetrahydrofolate + ADP + phosphate. Its pathway is one-carbon metabolism; tetrahydrofolate interconversion. Functionally, may provide the missing metabolic reaction required to link the mitochondria and the cytoplasm in the mammalian model of one-carbon folate metabolism complementing thus the enzymatic activities of MTHFD2. The protein is Monofunctional C1-tetrahydrofolate synthase, mitochondrial (MTHFD1L) of Bos taurus (Bovine).